Reading from the N-terminus, the 183-residue chain is Acireductone dioxygenase (183 aa).

Positions 99, 101, 105, and 144 each coordinate Fe(2+). His99, His101, Glu105, and His144 together coordinate Ni(2+).

Belongs to the acireductone dioxygenase (ARD) family. Monomer. Requires Fe(2+) as cofactor. Ni(2+) is required as a cofactor.

It carries out the reaction 1,2-dihydroxy-5-(methylsulfanyl)pent-1-en-3-one + O2 = 3-(methylsulfanyl)propanoate + CO + formate + 2 H(+). The catalysed reaction is 1,2-dihydroxy-5-(methylsulfanyl)pent-1-en-3-one + O2 = 4-methylsulfanyl-2-oxobutanoate + formate + 2 H(+). The protein operates within amino-acid biosynthesis; L-methionine biosynthesis via salvage pathway; L-methionine from S-methyl-5-thio-alpha-D-ribose 1-phosphate: step 5/6. Its function is as follows. Catalyzes 2 different reactions between oxygen and the acireductone 1,2-dihydroxy-3-keto-5-methylthiopentene (DHK-MTPene) depending upon the metal bound in the active site. Fe-containing acireductone dioxygenase (Fe-ARD) produces formate and 2-keto-4-methylthiobutyrate (KMTB), the alpha-ketoacid precursor of methionine in the methionine recycle pathway. Ni-containing acireductone dioxygenase (Ni-ARD) produces methylthiopropionate, carbon monoxide and formate, and does not lie on the methionine recycle pathway. The protein is Acireductone dioxygenase of Microcystis aeruginosa (strain NIES-843 / IAM M-2473).